The primary structure comprises 920 residues: Zinc finger MIZ domain-containing protein 2 (920 aa).

Disordered stretches follow at residues 1–22 (MNSM…GSFA) and 54–79 (SQVL…VAGG). Positions 60–79 (PMGPAGSPSGSSMMPGVAGG) are enriched in low complexity. The residue at position 111 (R111) is an Omega-N-methylarginine. Disordered stretches follow at residues 243–265 (GQRL…RQGV) and 286–391 (PSTA…SPNQ). Asymmetric dimethylarginine is present on residues R245 and R262. Residues 295–304 (PGQPPAPSPS) show a composition bias toward pro residues. Residues 334–354 (EQFNGQGASFNGGSVSYSQPG) show a composition bias toward polar residues. A compositionally biased stretch (pro residues) spans 366–379 (PSSPLPGNPTPPMT). Low complexity predominate over residues 380–389 (PSSSVPYMSP). Glycyl lysine isopeptide (Lys-Gly) (interchain with G-Cter in SUMO2) cross-links involve residues K402 and K457. The segment at 435 to 506 (PFRLQHNLAV…TIERGDNKTS (72 aa)) is interaction with AR. Residues 585 to 671 (GEDGVEQTAI…IYIQNSDYEE (87 aa)) form an SP-RING-type zinc finger. The Zn(2+) site is built by C616, H618, C639, and C642. Residue K692 forms a Glycyl lysine isopeptide (Lys-Gly) (interchain with G-Cter in SUMO2) linkage. The tract at residues 803-920 (SQMAPAGHLD…DDLLSLFENN (118 aa)) is disordered. A compositionally biased stretch (low complexity) spans 876–890 (AGEAPEPALDLLPEL). Positions 906-920 (PTNNNDDLLSLFENN) are enriched in polar residues.

Interacts with AR, SMARCA4/BRG1 and SMARCE1/BAF57. Interaction with either SMARCA4 and SMARCE1 enhances AR-mediated transcription. In terms of tissue distribution, expressed most abundantly in testis with lower levels in heart, brain, pancreas, prostate and ovary.

The protein resides in the nucleus. In terms of biological role, increases ligand-dependent transcriptional activity of AR and other nuclear hormone receptors. The sequence is that of Zinc finger MIZ domain-containing protein 2 (ZMIZ2) from Homo sapiens (Human).